We begin with the raw amino-acid sequence, 338 residues long: Galactinol synthase 2 (338 aa).

The active site involves K105. Mn(2+) is bound by residues D121, D123, and H258.

It belongs to the glycosyltransferase 8 family. Galactosyltransferase subfamily. A divalent metal cation serves as cofactor.

Its subcellular location is the cytoplasm. It carries out the reaction myo-inositol + UDP-alpha-D-galactose = alpha-D-galactosyl-(1-&gt;3)-1D-myo-inositol + UDP + H(+). Functionally, galactinol synthase involved in the biosynthesis of raffinose family oligosaccharides (RFOs) that function as osmoprotectants. May promote plant stress tolerance. In Solanum lycopersicum (Tomato), this protein is Galactinol synthase 2 (GOLS2).